Reading from the N-terminus, the 131-residue chain is Small ribosomal subunit protein uS11 (131 aa).

It belongs to the universal ribosomal protein uS11 family. Part of the 30S ribosomal subunit. Interacts with proteins S7 and S18. Binds to IF-3.

In terms of biological role, located on the platform of the 30S subunit, it bridges several disparate RNA helices of the 16S rRNA. Forms part of the Shine-Dalgarno cleft in the 70S ribosome. This is Small ribosomal subunit protein uS11 from Wigglesworthia glossinidia brevipalpis.